A 122-amino-acid chain; its full sequence is UPF0102 protein RL0336 (122 aa).

This sequence belongs to the UPF0102 family.

This Rhizobium johnstonii (strain DSM 114642 / LMG 32736 / 3841) (Rhizobium leguminosarum bv. viciae) protein is UPF0102 protein RL0336.